Reading from the N-terminus, the 392-residue chain is Selenide, water dikinase 1 (392 aa).

The active site involves Cys-31. Residues Lys-32, 67-69 (GMD), Asp-87, Asp-110, and 161-164 (GGQT) each bind ATP. Residue Asp-69 coordinates Mg(2+). Asp-110 contributes to the Mg(2+) binding site. Asp-265 contacts Mg(2+).

The protein belongs to the selenophosphate synthase 1 family. Class II subfamily. In terms of assembly, homodimer. Requires Mg(2+) as cofactor.

It localises to the cell membrane. The protein localises to the nucleus membrane. It catalyses the reaction hydrogenselenide + ATP + H2O = selenophosphate + AMP + phosphate + 2 H(+). Synthesizes selenophosphate from selenide and ATP. The sequence is that of Selenide, water dikinase 1 (sephs1) from Xenopus tropicalis (Western clawed frog).